A 34-amino-acid chain; its full sequence is MSDINASRLPAWLATCPCVGDDVNPTLSRGESLC.

Residues 1–10 (MSDINASRLP) constitute a propeptide that is removed on maturation. Residues 11 to 17 (AWLATCP) constitute a cross-link (cyclopeptide (Ala-Pro)). Positions 12–16 (WLATC) form a cross-link, 2'-cysteinyl-6'-hydroxytryptophan sulfoxide (Trp-Cys). Residues 18–34 (CVGDDVNPTLSRGESLC) constitute a propeptide that is removed on maturation.

It belongs to the MSDIN fungal toxin family. Processed by the macrocyclase-peptidase enzyme POPB to yield a toxic cyclic heptapeptide. POPB first removes 10 residues from the N-terminus. Conformational trapping of the remaining peptide forces the enzyme to release this intermediate rather than proceed to macrocyclization. The enzyme rebinds the remaining peptide in a different conformation and catalyzes macrocyclization of the N-terminal 7 residues.

Toxin that belongs to the bicyclic heptapeptides called phallotoxins. Although structurally related to amatoxins, phallotoxins have a different mode of action, which is the stabilization of F-actin. Phallotoxins are poisonous when administered parenterally, but not orally because of poor absorption. This chain is Phalloidin proprotein, found in Amanita phalloides (Death cap).